A 527-amino-acid polypeptide reads, in one-letter code: Arginine--tRNA ligase (527 aa).

The short motif at Ala-108 to His-118 is the 'HIGH' region element.

It belongs to the class-I aminoacyl-tRNA synthetase family. In terms of assembly, monomer.

The protein resides in the cytoplasm. The enzyme catalyses tRNA(Arg) + L-arginine + ATP = L-arginyl-tRNA(Arg) + AMP + diphosphate. The sequence is that of Arginine--tRNA ligase from Sulfurimonas denitrificans (strain ATCC 33889 / DSM 1251) (Thiomicrospira denitrificans (strain ATCC 33889 / DSM 1251)).